We begin with the raw amino-acid sequence, 93 residues long: uncharacterized protein (93 aa).

This is an uncharacterized protein from Gallid herpesvirus 2 (strain Chicken/Md5/ATCC VR-987) (GaHV-2).